Here is a 440-residue protein sequence, read N- to C-terminus: SET domain-containing protein 4 (440 aa).

The segment covering 1 to 16 (MQKGKGRTSRIRRRKL) has biased composition (basic residues). A disordered region spans residues 1–24 (MQKGKGRTSRIRRRKLCGSSESRG). Positions 48–273 (SNLAPACFPG…KHEEVFICYG (226 aa)) constitute an SET domain. An S-adenosyl-L-methionine-binding site is contributed by Tyr272.

It belongs to the class V-like SAM-binding methyltransferase superfamily. SETD4 family. Forms a ternary complex with TBK1 and ZNF268; the interaction with TBK1 is ZNF268-dependent and leads to TBK1 monomethylation.

The protein localises to the cytoplasm. It localises to the cytosol. It is found in the nucleus. The enzyme catalyses L-lysyl(4)-[histone H3] + S-adenosyl-L-methionine = N(6)-methyl-L-lysyl(4)-[histone H3] + S-adenosyl-L-homocysteine + H(+). It catalyses the reaction N(6)-methyl-L-lysyl(4)-[histone H3] + S-adenosyl-L-methionine = N(6),N(6)-dimethyl-L-lysyl(4)-[histone H3] + S-adenosyl-L-homocysteine + H(+). The catalysed reaction is L-lysyl(20)-[histone H4] + S-adenosyl-L-methionine = N(6)-methyl-L-lysyl(20)-[histone H4] + S-adenosyl-L-homocysteine + H(+). It carries out the reaction N(6)-methyl-L-lysyl(20)-[histone H4] + S-adenosyl-L-methionine = N(6),N(6)-dimethyl-L-lysyl(20)-[histone H4] + S-adenosyl-L-homocysteine + H(+). The enzyme catalyses N(6),N(6)-dimethyl-L-lysyl(20)-[histone H4] + S-adenosyl-L-methionine = N(6),N(6),N(6)-trimethyl-L-lysyl(20)-[histone H4] + S-adenosyl-L-homocysteine + H(+). It catalyses the reaction L-lysyl-[protein] + S-adenosyl-L-methionine = N(6)-methyl-L-lysyl-[protein] + S-adenosyl-L-homocysteine + H(+). Functionally, protein-lysine N-methyltransferase that methylates both histones and non-histone proteins. Via its catalytic activity, regulates many processes, including cell proliferation, cell differentiation, inflammatory response and apoptosis. Regulates the inflammatory response by mediating mono- and dimethylation of 'Lys-4' of histone H3 (H3K4me1 and H3K4me2, respectively), leading to activate the transcription of pro-inflammatory cytokines IL6 and TNF-alpha. Through the catalysis of TBK1 monomethylation, may regulate virus-induced interferon signaling. TBK1 monomethylation enhances its interaction with MAVS, STING and IRF3, hence promoting antiviral interferon signaling. Also involved in the regulation of stem cell quiescence by catalyzing the trimethylation of 'Lys-20' of histone H4 (H4K20me3), thereby promoting heterochromatin formation. In the brain, epigenetically controls quiescence of neural stem cells for sustaining a protected neural stem cell population and maintaining a stem cell reservoir for neurogenesis. Involved in proliferation, migration, paracrine and myogenic differentiation of bone marrow mesenchymal stem cells (BMSCs). Through the catalysis of XRCC5/Ku70 trimethylation, regulates BAX-mediated apoptosis. SETD4-catalyzed XRCC5 methylation results in XRCC5 translocation to the cytoplasm, where it interacts with BAX, sequestering it from the mitochondria, hence preventing BAX-mediated apoptosis. The chain is SET domain-containing protein 4 from Homo sapiens (Human).